An 81-amino-acid chain; its full sequence is Cell division protein ZapB (81 aa).

The stretch at 5–81 forms a coiled coil; that stretch reads LEVFEKLEAK…QALLGRMEEV (77 aa). An N6-acetyllysine modification is found at Lys10. The segment at 36–67 is disordered; sequence NNSLSQEVQNAQHQREELERENNHLKEQQNGW. Positions 37-47 are enriched in polar residues; the sequence is NSLSQEVQNAQ. Positions 48–62 are enriched in basic and acidic residues; sequence HQREELERENNHLKE.

This sequence belongs to the ZapB family. Homodimer. The ends of the coiled-coil dimer bind to each other, forming polymers. Interacts with FtsZ.

It is found in the cytoplasm. Its function is as follows. Non-essential, abundant cell division factor that is required for proper Z-ring formation. It is recruited early to the divisome by direct interaction with FtsZ, stimulating Z-ring assembly and thereby promoting cell division earlier in the cell cycle. Its recruitment to the Z-ring requires functional FtsA or ZipA. This is Cell division protein ZapB from Shigella boydii serotype 4 (strain Sb227).